We begin with the raw amino-acid sequence, 185 residues long: Small ribosomal subunit protein uS4 (185 aa).

In terms of domain architecture, S4 RNA-binding spans Arg107–His179. The tract at residues Asn161–Asn185 is disordered.

This sequence belongs to the universal ribosomal protein uS4 family.

The sequence is that of Small ribosomal subunit protein uS4 from Entamoeba histolytica (strain ATCC 30459 / HM-1:IMSS / ABRM).